We begin with the raw amino-acid sequence, 1008 residues long: Ubiquitin carboxyl-terminal hydrolase 16 (1008 aa).

Residues 7 to 27 form a helical membrane-spanning segment; that stretch reads LGISSLVLVVSLVLPLIGLFV. Zn(2+)-binding residues include Cys74, Cys77, Cys85, Cys88, Cys94, Cys98, His107, and Cys111. An MYND-type zinc finger spans residues 74-111; that stretch reads CPVCYCLATTRCSRCKAVRYCSGKCQIIHWRQGHKDEC. 5 disordered regions span residues 122-149, 159-178, 187-233, 275-309, and 326-379; these read DESD…GPEP, LSNR…DNKD, VSVA…LDAH, SVHK…DPSL, and SDSC…YISD. Positions 193–203 are enriched in low complexity; sequence SGSSFSGFSSS. Residues 222–233 show a composition bias toward basic and acidic residues; the sequence is ESERSESLLDAH. Residues 284-295 show a composition bias toward polar residues; sequence GQNQSQSRSLHS. Positions 340–351 are enriched in low complexity; that stretch reads SSLHFSFGSGSS. In terms of domain architecture, USP spans 542-847; it reads CGLINVGNSC…GAYMLFYARC (306 aa). Catalysis depends on Cys551, which acts as the Nucleophile. His807 (proton acceptor) is an active-site residue. 2 disordered regions span residues 859–905 and 952–1008; these read KTEA…GNIQ and FIFG…GGER. Composition is skewed to low complexity over residues 878 to 888 and 965 to 992; these read STISRSVSTSS and SETP…RSSP.

It belongs to the peptidase C19 family. Interacts with SHM1 and SHM4. Interacts with HIPP27. In terms of tissue distribution, expressed in flowers, siliques, rosette leaves, cauline leaves, stems and at a lower level in roots. In roots, expressed in the sieve elements.

It localises to the membrane. It catalyses the reaction Thiol-dependent hydrolysis of ester, thioester, amide, peptide and isopeptide bonds formed by the C-terminal Gly of ubiquitin (a 76-residue protein attached to proteins as an intracellular targeting signal).. Functionally, recognizes and hydrolyzes the peptide bond at the C-terminal Gly of ubiquitin. Involved in the processing of poly-ubiquitin precursors as well as that of ubiquitinated proteins. Involved in salt tolerance by modulating sodium transport activity and repressing cell death at least partially through modulating SHM1 stability and activity. Involved in cadmium tolerance by interacting with HIPP27 and probably modulating its stability. This is Ubiquitin carboxyl-terminal hydrolase 16 (UBP16) from Arabidopsis thaliana (Mouse-ear cress).